The chain runs to 152 residues: MTITDLVLILFIAALLAYALYDQFIMPRRNGPTLLSIALLHRGRVDSVIFVGLVAILIYNNVTSHGAQMTTWLLSALALMGFYIFWIRTPRIIFKQRGFFFANVWIEYNRIKEMNLSEDGVLVMQLEQRRLLIRVRNIDDLEKIYKLLIENQ.

3 consecutive transmembrane segments (helical) span residues 6 to 26 (LVLI…QFIM), 45 to 65 (VDSV…VTSH), and 67 to 87 (AQMT…IFWI).

It belongs to the UPF0266 family.

It is found in the cell inner membrane. The chain is UPF0266 membrane protein YobD from Salmonella paratyphi B (strain ATCC BAA-1250 / SPB7).